A 119-amino-acid chain; its full sequence is UPF0102 protein Nther_1376 (119 aa).

It belongs to the UPF0102 family.

This is UPF0102 protein Nther_1376 from Natranaerobius thermophilus (strain ATCC BAA-1301 / DSM 18059 / JW/NM-WN-LF).